The chain runs to 375 residues: MLLFLLSALVLLTQPLGYLEAEMKTYSHRTMPSACTLVMCSSVESGLPGRDGRDGREGPRGEKGDPGLPGAAGQAGMPGQAGPVGPKGDNGSVGEPGPKGDTGPSGPPGPPGVPGPAGREGPLGKQGNIGPQGKPGPKGEAGPKGEVGAPGMQGSAGARGLAGPKGERGVPGERGVPGNTGAAGSAGAMGPQGSPGARGPPGLKGDKGIPGDKGAKGESGLPDVASLRQQVEALQGQVQHLQAAFSQYKKVELFPNGQSVGEKIFKTAGFVKPFTEAQLLCTQAGGQLASPRSAAENAALQQLVVAKNEAAFLSMTDSKTEGKFTYPTGESLVYSNWAPGEPNDDGGSEDCVEIFTNGKWNDRACGEKRLVVCEF.

Residues 1 to 20 (MLLFLLSALVLLTQPLGYLE) form the signal peptide. S-nitrosocysteine occurs at positions 35 and 40. Positions 45-221 (SGLPGRDGRD…DKGAKGESGL (177 aa)) are disordered. The Collagen-like domain occupies 46 to 222 (GLPGRDGRDG…KGAKGESGLP (177 aa)). Basic and acidic residues predominate over residues 50-65 (RDGRDGREGPRGEKGD). Residues 66-86 (PGLPGAAGQAGMPGQAGPVGP) are compositionally biased toward low complexity. 4-hydroxyproline is present on P78. K87 carries the post-translational modification 5-hydroxylysine. N90 carries an N-linked (GlcNAc...) asparagine glycan. P96 is subject to 4-hydroxyproline. K99 bears the 5-hydroxylysine mark. Positions 105 to 114 (SGPPGPPGVP) are enriched in pro residues. 2 stretches are compositionally biased toward low complexity: residues 116 to 132 (PAGR…IGPQ) and 138 to 150 (KGEA…VGAP). 4-hydroxyproline is present on residues P171 and P177. Over residues 204 to 216 (KGDKGIPGDKGAK) the composition is skewed to basic and acidic residues. Residues 223-252 (DVASLRQQVEALQGQVQHLQAAFSQYKKVE) adopt a coiled-coil conformation. The 116-residue stretch at 260–375 (VGEKIFKTAG…GEKRLVVCEF (116 aa)) folds into the C-type lectin domain. Intrachain disulfides connect C281–C373 and C351–C365.

This sequence belongs to the SFTPD family. Oligomeric complex of 4 set of homotrimers. In terms of processing, the N-terminus is blocked. Post-translationally, hydroxylation on proline residues within the sequence motif, GXPG, is most likely to be 4-hydroxy as this fits the requirement for 4-hydroxylation in vertebrates. S-nitrosylation at Cys-35 and Cys-40 alters the quaternary structure which results in a pro-inflammatory chemoattractive signaling activity with macrophages. In terms of tissue distribution, expressed in lung, brain, pancreas and adipose tissue (mainly mature adipocytes).

It localises to the secreted. Its subcellular location is the extracellular space. It is found in the extracellular matrix. The protein resides in the surface film. Contributes to the lung's defense against inhaled microorganisms, organic antigens and toxins. Interacts with compounds such as bacterial lipopolysaccharides, oligosaccharides and fatty acids and modulates leukocyte action in immune response. May participate in the extracellular reorganization or turnover of pulmonary surfactant. Binds strongly maltose residues and to a lesser extent other alpha-glucosyl moieties. In Homo sapiens (Human), this protein is Pulmonary surfactant-associated protein D (SFTPD).